Consider the following 103-residue polypeptide: Large ribosomal subunit protein uL24 (103 aa).

The protein belongs to the universal ribosomal protein uL24 family. In terms of assembly, part of the 50S ribosomal subunit.

In terms of biological role, one of two assembly initiator proteins, it binds directly to the 5'-end of the 23S rRNA, where it nucleates assembly of the 50S subunit. Functionally, one of the proteins that surrounds the polypeptide exit tunnel on the outside of the subunit. This is Large ribosomal subunit protein uL24 from Lachnospira eligens (strain ATCC 27750 / DSM 3376 / VPI C15-48 / C15-B4) (Eubacterium eligens).